A 503-amino-acid chain; its full sequence is Galactose/methyl galactoside import ATP-binding protein MglA 2 (503 aa).

ABC transporter domains follow at residues 11 to 246 (LEMT…VGRE) and 257 to 503 (TPKE…SRYL). 43 to 50 (GENGAGKS) contacts ATP.

Belongs to the ABC transporter superfamily. Galactose/methyl galactoside importer (TC 3.A.1.2.3) family. The complex is composed of one ATP-binding protein (MglA), two transmembrane proteins (MglC) and a solute-binding protein (MglB).

It localises to the cell inner membrane. It catalyses the reaction D-galactose(out) + ATP + H2O = D-galactose(in) + ADP + phosphate + H(+). It carries out the reaction methyl beta-D-galactoside(out) + ATP + H2O = methyl beta-D-galactoside(in) + ADP + phosphate + H(+). Part of the ABC transporter complex MglABC involved in galactose/methyl galactoside import. Responsible for energy coupling to the transport system. In Photobacterium profundum (strain SS9), this protein is Galactose/methyl galactoside import ATP-binding protein MglA 2.